The primary structure comprises 187 residues: Putative manganese efflux pump MntP (187 aa).

Transmembrane regions (helical) follow at residues 3–23 (MSAT…ASIG), 41–61 (LIFG…GFFA), 62–82 (SQYI…ILGG), 107–129 (LLVC…LAFL), 143–163 (ATMI…PILG), and 166–186 (AEII…YEHL).

Belongs to the MntP (TC 9.B.29) family.

It localises to the cell inner membrane. Probably functions as a manganese efflux pump. In Pectobacterium atrosepticum (strain SCRI 1043 / ATCC BAA-672) (Erwinia carotovora subsp. atroseptica), this protein is Putative manganese efflux pump MntP.